A 249-amino-acid chain; its full sequence is Probable transcriptional regulatory protein LBJ_0543 (249 aa).

It belongs to the TACO1 family.

It is found in the cytoplasm. This Leptospira borgpetersenii serovar Hardjo-bovis (strain JB197) protein is Probable transcriptional regulatory protein LBJ_0543.